Reading from the N-terminus, the 158-residue chain is Transcription elongation factor GreA (158 aa).

A coiled-coil region spans residues 4-75 (EKTYPMTQEG…TQLENMIRNA (72 aa)).

It belongs to the GreA/GreB family.

In terms of biological role, necessary for efficient RNA polymerase transcription elongation past template-encoded arresting sites. The arresting sites in DNA have the property of trapping a certain fraction of elongating RNA polymerases that pass through, resulting in locked ternary complexes. Cleavage of the nascent transcript by cleavage factors such as GreA or GreB allows the resumption of elongation from the new 3'terminus. GreA releases sequences of 2 to 3 nucleotides. In Bacillus cereus (strain ATCC 10987 / NRS 248), this protein is Transcription elongation factor GreA.